Consider the following 345-residue polypeptide: D-fructose 1,6-bisphosphatase class 2/sedoheptulose 1,7-bisphosphatase (345 aa).

Aspartate 33, glutamate 57, aspartate 97, and glutamate 100 together coordinate Mn(2+). Substrate-binding positions include 100-102, tyrosine 131, 176-178, and 198-200; these read EGT, RDR, and DGD. Position 225 (glutamate 225) interacts with Mn(2+).

Belongs to the FBPase class 2 family. Homotetramer. It depends on Mn(2+) as a cofactor.

It carries out the reaction beta-D-fructose 1,6-bisphosphate + H2O = beta-D-fructose 6-phosphate + phosphate. The enzyme catalyses D-sedoheptulose 1,7-bisphosphate + H2O = D-sedoheptulose 7-phosphate + phosphate. It participates in carbohydrate biosynthesis; Calvin cycle. In terms of biological role, catalyzes the hydrolysis of fructose 1,6-bisphosphate (Fru 1,6-P2) and sedoheptulose 1,7-bisphosphate (Sed 1,7-P2) to fructose 6-phosphate and sedoheptulose 7-phosphate, respectively. The sequence is that of D-fructose 1,6-bisphosphatase class 2/sedoheptulose 1,7-bisphosphatase from Nostoc sp. (strain PCC 7120 / SAG 25.82 / UTEX 2576).